A 601-amino-acid polypeptide reads, in one-letter code: tRNA 5-methylaminomethyl-2-thiouridine biosynthesis bifunctional protein MnmC (601 aa).

Residues 1 to 237 (MSDPTASPLI…KKQRLEAVAP (237 aa)) form a tRNA (mnm(5)s(2)U34)-methyltransferase region. The interval 252 to 601 (IGGGIAGAAM…FSSRVATGAV (350 aa)) is FAD-dependent cmnm(5)s(2)U34 oxidoreductase.

It in the N-terminal section; belongs to the methyltransferase superfamily. tRNA (mnm(5)s(2)U34)-methyltransferase family. The protein in the C-terminal section; belongs to the DAO family. Requires FAD as cofactor.

The protein localises to the cytoplasm. It catalyses the reaction 5-aminomethyl-2-thiouridine(34) in tRNA + S-adenosyl-L-methionine = 5-methylaminomethyl-2-thiouridine(34) in tRNA + S-adenosyl-L-homocysteine + H(+). Its function is as follows. Catalyzes the last two steps in the biosynthesis of 5-methylaminomethyl-2-thiouridine (mnm(5)s(2)U) at the wobble position (U34) in tRNA. Catalyzes the FAD-dependent demodification of cmnm(5)s(2)U34 to nm(5)s(2)U34, followed by the transfer of a methyl group from S-adenosyl-L-methionine to nm(5)s(2)U34, to form mnm(5)s(2)U34. This chain is tRNA 5-methylaminomethyl-2-thiouridine biosynthesis bifunctional protein MnmC, found in Caulobacter sp. (strain K31).